A 274-amino-acid chain; its full sequence is NADPH-dependent 7-cyano-7-deazaguanine reductase (274 aa).

80–82 (VES) provides a ligand contact to substrate. An NADPH-binding site is contributed by 82–83 (SK). The active-site Thioimide intermediate is cysteine 181. Aspartate 188 acts as the Proton donor in catalysis. 220–221 (HE) serves as a coordination point for substrate. NADPH is bound at residue 249-250 (RG).

The protein belongs to the GTP cyclohydrolase I family. QueF type 2 subfamily. Homodimer.

The protein localises to the cytoplasm. It carries out the reaction 7-aminomethyl-7-carbaguanine + 2 NADP(+) = 7-cyano-7-deazaguanine + 2 NADPH + 3 H(+). It participates in tRNA modification; tRNA-queuosine biosynthesis. In terms of biological role, catalyzes the NADPH-dependent reduction of 7-cyano-7-deazaguanine (preQ0) to 7-aminomethyl-7-deazaguanine (preQ1). This chain is NADPH-dependent 7-cyano-7-deazaguanine reductase, found in Burkholderia vietnamiensis (strain G4 / LMG 22486) (Burkholderia cepacia (strain R1808)).